Here is a 226-residue protein sequence, read N- to C-terminus: 2-C-methyl-D-erythritol 4-phosphate cytidylyltransferase (226 aa).

It belongs to the IspD/TarI cytidylyltransferase family. IspD subfamily.

It carries out the reaction 2-C-methyl-D-erythritol 4-phosphate + CTP + H(+) = 4-CDP-2-C-methyl-D-erythritol + diphosphate. Its pathway is isoprenoid biosynthesis; isopentenyl diphosphate biosynthesis via DXP pathway; isopentenyl diphosphate from 1-deoxy-D-xylulose 5-phosphate: step 2/6. Catalyzes the formation of 4-diphosphocytidyl-2-C-methyl-D-erythritol from CTP and 2-C-methyl-D-erythritol 4-phosphate (MEP). The sequence is that of 2-C-methyl-D-erythritol 4-phosphate cytidylyltransferase from Bacillus mycoides (strain KBAB4) (Bacillus weihenstephanensis).